The sequence spans 615 residues: UvrABC system protein C (615 aa).

The GIY-YIG domain occupies 14 to 91 (TSPGCYIHKD…IKENKPKYNI (78 aa)). The UVR domain maps to 196 to 231 (NKIIDELKGKMAAAAQTMEFERAAEYRDLIQAIGTL).

It belongs to the UvrC family. In terms of assembly, interacts with UvrB in an incision complex.

The protein localises to the cytoplasm. Functionally, the UvrABC repair system catalyzes the recognition and processing of DNA lesions. UvrC both incises the 5' and 3' sides of the lesion. The N-terminal half is responsible for the 3' incision and the C-terminal half is responsible for the 5' incision. The polypeptide is UvrABC system protein C (Streptococcus pneumoniae (strain ATCC 700669 / Spain 23F-1)).